A 663-amino-acid polypeptide reads, in one-letter code: UvrABC system protein B (663 aa).

Positions 31-271 constitute a Helicase ATP-binding domain; sequence DNIEGGEKAQ…EQSISKIQAE (241 aa). 44-51 contributes to the ATP binding site; that stretch reads GATGTGKT. The Beta-hairpin motif lies at 97-120; the sequence is YYDYYQPEAYVPSSDTYIEKDSSV. Residues 435–601 form the Helicase C-terminal domain; sequence QMDDLLGEIN…TIKKDIRDLI (167 aa). In terms of domain architecture, UVR spans 627 to 662; it reads QEAIKQLQKNMQEAAELLDFELAAQLRDLILELKAM.

Belongs to the UvrB family. Forms a heterotetramer with UvrA during the search for lesions. Interacts with UvrC in an incision complex.

It is found in the cytoplasm. Its function is as follows. The UvrABC repair system catalyzes the recognition and processing of DNA lesions. A damage recognition complex composed of 2 UvrA and 2 UvrB subunits scans DNA for abnormalities. Upon binding of the UvrA(2)B(2) complex to a putative damaged site, the DNA wraps around one UvrB monomer. DNA wrap is dependent on ATP binding by UvrB and probably causes local melting of the DNA helix, facilitating insertion of UvrB beta-hairpin between the DNA strands. Then UvrB probes one DNA strand for the presence of a lesion. If a lesion is found the UvrA subunits dissociate and the UvrB-DNA preincision complex is formed. This complex is subsequently bound by UvrC and the second UvrB is released. If no lesion is found, the DNA wraps around the other UvrB subunit that will check the other stand for damage. This chain is UvrABC system protein B, found in Streptococcus equi subsp. zooepidemicus (strain H70).